The following is a 295-amino-acid chain: Glycine N-methyltransferase (295 aa).

N-acetylvaline is present on Val2. (6S)-5-methyl-5,6,7,8-tetrahydrofolate-binding residues include Ser4 and Tyr6. A Phosphoserine modification is found at Ser10. S-adenosyl-L-methionine is bound by residues Tyr22, Trp31, Tyr34, and Arg41. A Phosphotyrosine modification is found at Tyr34. Lys46 is subject to N6-succinyllysine. S-adenosyl-L-methionine contacts are provided by residues Ala65, 86–88, 117–118, 139–142, and Arg178; these read DAS, NW, and LGNS. Lys193, Lys198, and Lys203 each carry N6-succinyllysine. His217 lines the (6S)-5-methyl-5,6,7,8-tetrahydrofolate pocket. Tyr223 contributes to the S-adenosyl-L-methionine binding site. Arg242 serves as a coordination point for (6S)-5-methyl-5,6,7,8-tetrahydrofolate.

Belongs to the class I-like SAM-binding methyltransferase superfamily. Glycine N-methyltransferase family. Homotetramer. Expressed only in liver, pancreas, and prostate.

It is found in the cytoplasm. The enzyme catalyses glycine + S-adenosyl-L-methionine = sarcosine + S-adenosyl-L-homocysteine + H(+). With respect to regulation, inhibited by 5-methyltetrahydrofolate monoglutamate and by 5-methyltetrahydrofolate pentaglutamate, inhibition is much more effective by the pentaglutamate form than by the monoglutamate form. Two molecules of 5-methyltetrahydrofolate are bound per tetramer. The binding sites are localized between subunits. Inhibitor binding may preclude movements of the polypeptide chain that are necessary for enzyme activity. Catalyzes the methylation of glycine by using S-adenosylmethionine (AdoMet) to form N-methylglycine (sarcosine) with the concomitant production of S-adenosylhomocysteine (AdoHcy), a reaction regulated by the binding of 5-methyltetrahydrofolate. Plays an important role in the regulation of methyl group metabolism by regulating the ratio between S-adenosyl-L-methionine and S-adenosyl-L-homocysteine. The protein is Glycine N-methyltransferase of Homo sapiens (Human).